A 351-amino-acid polypeptide reads, in one-letter code: MTGIIAAAGISLLVSFLLLPPLIRILYRFKFGQEIRDDGPQGHKTKQGTPTMGGIAIIFGTVVGYFGAHAVTMTPPTVSGVLVILLFVGLGCVGFLDDFIKIYKRRSLGLRSGAKMLGQIIVGVGFAIGVTMFPNSYTYTPGSTHLSLLRDFGPPMAVWLFVIWALLLIVATSNAVNLTDGLDGLATGATILSLVAYVIIGNWQLRQSCINALEPNCYTVRDPLDLAVVAAAALGGCIAFLWFNAPPAKIFMGDTGSLALGGLLVGLAITTRTQLLLLVIGGLFVLITASVIIQVGSFRLTGKRVFRMAPLQHHFELKGWAETTIVIRFWIIQGLFVAAAMALFYLEWMPR.

The next 10 membrane-spanning stretches (helical) occupy residues 3–23 (GIIAAAGISLLVSFLLLPPLI), 51–71 (TMGGIAIIFGTVVGYFGAHAV), 76–96 (PTVSGVLVILLFVGLGCVGFL), 113–133 (GAKMLGQIIVGVGFAIGVTMF), 152–172 (FGPPMAVWLFVIWALLLIVAT), 181–201 (GLDGLATGATILSLVAYVIIG), 223–243 (PLDLAVVAAAALGGCIAFLWF), 250–270 (IFMGDTGSLALGGLLVGLAIT), 275–295 (LLLLVIGGLFVLITASVIIQV), and 329–349 (FWIIQGLFVAAAMALFYLEWM).

The protein belongs to the glycosyltransferase 4 family. MraY subfamily. The cofactor is Mg(2+).

The protein resides in the cell membrane. The catalysed reaction is UDP-N-acetyl-alpha-D-muramoyl-L-alanyl-gamma-D-glutamyl-meso-2,6-diaminopimeloyl-D-alanyl-D-alanine + di-trans,octa-cis-undecaprenyl phosphate = di-trans,octa-cis-undecaprenyl diphospho-N-acetyl-alpha-D-muramoyl-L-alanyl-D-glutamyl-meso-2,6-diaminopimeloyl-D-alanyl-D-alanine + UMP. It participates in cell wall biogenesis; peptidoglycan biosynthesis. Functionally, catalyzes the initial step of the lipid cycle reactions in the biosynthesis of the cell wall peptidoglycan: transfers peptidoglycan precursor phospho-MurNAc-pentapeptide from UDP-MurNAc-pentapeptide onto the lipid carrier undecaprenyl phosphate, yielding undecaprenyl-pyrophosphoryl-MurNAc-pentapeptide, known as lipid I. The chain is Phospho-N-acetylmuramoyl-pentapeptide-transferase from Thermobifida fusca (strain YX).